Reading from the N-terminus, the 365-residue chain is 4-hydroxy-3-methylbut-2-en-1-yl diphosphate synthase (flavodoxin) (365 aa).

[4Fe-4S] cluster is bound by residues Cys265, Cys268, Cys300, and Glu307.

This sequence belongs to the IspG family. Requires [4Fe-4S] cluster as cofactor.

The catalysed reaction is (2E)-4-hydroxy-3-methylbut-2-enyl diphosphate + oxidized [flavodoxin] + H2O + 2 H(+) = 2-C-methyl-D-erythritol 2,4-cyclic diphosphate + reduced [flavodoxin]. It participates in isoprenoid biosynthesis; isopentenyl diphosphate biosynthesis via DXP pathway; isopentenyl diphosphate from 1-deoxy-D-xylulose 5-phosphate: step 5/6. In terms of biological role, converts 2C-methyl-D-erythritol 2,4-cyclodiphosphate (ME-2,4cPP) into 1-hydroxy-2-methyl-2-(E)-butenyl 4-diphosphate. This is 4-hydroxy-3-methylbut-2-en-1-yl diphosphate synthase (flavodoxin) from Bacillus mycoides (strain KBAB4) (Bacillus weihenstephanensis).